The following is a 518-amino-acid chain: Nitrogenase iron-iron protein alpha chain (518 aa).

[8Fe-7S] cluster-binding residues include Cys49, Cys75, and Cys138. Positions 257 and 423 each coordinate [8Fe-9S-C-homocitryl] cluster.

It belongs to the NifD/NifK/NifE/NifN family. As to quaternary structure, hexamer of two alpha, two beta, and two delta chains. It depends on [8Fe-7S] cluster as a cofactor. [8Fe-9S-C-homocitryl] cluster serves as cofactor.

The catalysed reaction is N2 + 8 reduced [2Fe-2S]-[ferredoxin] + 16 ATP + 16 H2O = H2 + 8 oxidized [2Fe-2S]-[ferredoxin] + 2 NH4(+) + 16 ADP + 16 phosphate + 6 H(+). Its function is as follows. This iron-iron protein is part of the nitrogenase complex that catalyzes the key enzymatic reactions in nitrogen fixation. Other nitrogenase complexes utilize a molybdenum-iron protein or a vanadium-iron protein. In Azotobacter vinelandii, this protein is Nitrogenase iron-iron protein alpha chain (anfD).